A 224-amino-acid polypeptide reads, in one-letter code: Holliday junction branch migration complex subunit RuvA (224 aa).

Residues 1–64 form a domain I region; that stretch reads MIGKVAGILD…EDLLQLFGFP (64 aa). Residues 65-143 form a domain II region; sequence TMIEKEWHRL…ALMAMGGGTA (79 aa). A disordered region spans residues 141–185; that stretch reads GTAALAPSEPPEPEPGTSSGSRRKTRAPEPPRPSHTADALSALAN. Positions 144 to 170 are flexible linker; that stretch reads ALAPSEPPEPEPGTSSGSRRKTRAPEP. Positions 171-224 are domain III; it reads PRPSHTADALSALANLGYQPTDAAQAVAQAAGESPDADTAALIRAALKLLAPKS.

This sequence belongs to the RuvA family. As to quaternary structure, homotetramer. Forms an RuvA(8)-RuvB(12)-Holliday junction (HJ) complex. HJ DNA is sandwiched between 2 RuvA tetramers; dsDNA enters through RuvA and exits via RuvB. An RuvB hexamer assembles on each DNA strand where it exits the tetramer. Each RuvB hexamer is contacted by two RuvA subunits (via domain III) on 2 adjacent RuvB subunits; this complex drives branch migration. In the full resolvosome a probable DNA-RuvA(4)-RuvB(12)-RuvC(2) complex forms which resolves the HJ.

It localises to the cytoplasm. In terms of biological role, the RuvA-RuvB-RuvC complex processes Holliday junction (HJ) DNA during genetic recombination and DNA repair, while the RuvA-RuvB complex plays an important role in the rescue of blocked DNA replication forks via replication fork reversal (RFR). RuvA specifically binds to HJ cruciform DNA, conferring on it an open structure. The RuvB hexamer acts as an ATP-dependent pump, pulling dsDNA into and through the RuvAB complex. HJ branch migration allows RuvC to scan DNA until it finds its consensus sequence, where it cleaves and resolves the cruciform DNA. The sequence is that of Holliday junction branch migration complex subunit RuvA from Cereibacter sphaeroides (strain ATCC 17029 / ATH 2.4.9) (Rhodobacter sphaeroides).